A 773-amino-acid chain; its full sequence is Circadian clock protein PASD1 (773 aa).

The PAS domain occupies 30 to 102; the sequence is YDYFNQVTLQ…IILKFPLLNS (73 aa). Residues 313 to 361 form a disordered region; sequence SVDQEGPMDQQDPENPVAPLDQAGLMDPVDPEDSVDLGAAGASAQPLQP. A necessary for transcriptional repression region spans residues 365–412; the sequence is VAYDIISQELELMKKLKEQLEERTWLLHDAIQNQQNALELMMDHLQKQ. Residues 365–412 adopt a coiled-coil conformation; it reads VAYDIISQELELMKKLKEQLEERTWLLHDAIQNQQNALELMMDHLQKQ. Disordered stretches follow at residues 427–448, 506–569, and 732–773; these read SEAVPKKQQKQHAGQVKRPLPH, QRKV…QLQE, and GVEG…NKPC. Positions 475-553 form a coiled coil; the sequence is VAFNQQQLVQ…QERKKWQGQM (79 aa). Basic and acidic residues predominate over residues 506–536; the sequence is QRKVQKQKKMQEKKKLQEQKMQEKKKLQEQR.

As to quaternary structure, interacts with the CLOCK-BMAL1 heterodimer; this interaction inhibits CLOCK-BMAL1 transcriptional activation and suppress circadian timekeeping. Interacts with BMAL1. Testis-specific. Expressed in a broad range of cancer cells, including melanoma, lung cancer, and breast cancer (at protein level). Testis-specific. Found in histologically normal tissues from patients with uterus, lung and small intestine cancers. Widespread expression seen in solid tumors and diffuse large B-cell lymphoma (DLBCL)-derived cell lines. Isoform 2 is expressed in all DLBCL-derived cell lines, while isoform 1 is preferentially expressed in cell lines derived from non-germinal center DLBCL.

Its subcellular location is the nucleus. Its function is as follows. Functions as a suppressor of the biological clock that drives the daily circadian rhythms of cells throughout the body. Acts as a nuclear repressor of the CLOCK-BMAL1 heterodimer-mediated transcriptional activation of the core clock components. Inhibits circadian clock function in cancer cells, when overexpressed. The polypeptide is Circadian clock protein PASD1 (Homo sapiens (Human)).